An 80-amino-acid chain; its full sequence is U-actitoxin-Avd9b (80 aa).

The N-terminal stretch at 1–20 is a signal peptide; it reads MNLKVLAVFVLCAILVVVTA. The propeptide occupies 21-39; it reads ERRGTETGGYKKDTLQDLK. The ShKT domain maps to 45–80; sequence CFDRYREAACTSDNIRLLCKTSAKYQINCKKSCGLC. 3 disulfides stabilise this stretch: C45/C80, C54/C73, and C63/C77. The tract at residues 68–69 is crucial for binding to potassium channels; the sequence is KY.

The protein belongs to the sea anemone type 1 potassium channel toxin family. Type 1b subfamily.

It localises to the secreted. Its subcellular location is the nematocyst. Inhibits voltage-gated potassium channels (Kv1/KCNA). The polypeptide is U-actitoxin-Avd9b (Anemonia viridis (Snakelocks anemone)).